Reading from the N-terminus, the 169-residue chain is Probable inosine/xanthosine triphosphatase (169 aa).

Aspartate 58 contributes to the Mg(2+) binding site.

It belongs to the YjjX NTPase family. As to quaternary structure, homodimer. Mg(2+) is required as a cofactor. The cofactor is Mn(2+).

The catalysed reaction is XTP + H2O = XDP + phosphate + H(+). The enzyme catalyses ITP + H2O = IDP + phosphate + H(+). In terms of biological role, phosphatase that hydrolyzes non-canonical purine nucleotides such as XTP and ITP to their respective diphosphate derivatives. Probably excludes non-canonical purines from DNA/RNA precursor pool, thus preventing their incorporation into DNA/RNA and avoiding chromosomal lesions. This chain is Probable inosine/xanthosine triphosphatase, found in Archaeoglobus fulgidus (strain ATCC 49558 / DSM 4304 / JCM 9628 / NBRC 100126 / VC-16).